Consider the following 616-residue polypeptide: Chaperone protein HscA homolog (616 aa).

This sequence belongs to the heat shock protein 70 family.

Its function is as follows. Chaperone involved in the maturation of iron-sulfur cluster-containing proteins. Has a low intrinsic ATPase activity which is markedly stimulated by HscB. This Histophilus somni (strain 129Pt) (Haemophilus somnus) protein is Chaperone protein HscA homolog.